The following is a 94-amino-acid chain: Co-chaperonin GroES (94 aa).

It belongs to the GroES chaperonin family. As to quaternary structure, heptamer of 7 subunits arranged in a ring. Interacts with the chaperonin GroEL.

Its subcellular location is the cytoplasm. Functionally, together with the chaperonin GroEL, plays an essential role in assisting protein folding. The GroEL-GroES system forms a nano-cage that allows encapsulation of the non-native substrate proteins and provides a physical environment optimized to promote and accelerate protein folding. GroES binds to the apical surface of the GroEL ring, thereby capping the opening of the GroEL channel. This chain is Co-chaperonin GroES, found in Brevibacillus choshinensis.